The following is a 103-amino-acid chain: Small ribosomal subunit protein uS14c (103 aa).

It belongs to the universal ribosomal protein uS14 family. As to quaternary structure, part of the 30S ribosomal subunit.

The protein localises to the plastid. It localises to the chloroplast. Functionally, binds 16S rRNA, required for the assembly of 30S particles. This is Small ribosomal subunit protein uS14c from Agrostis stolonifera (Creeping bentgrass).